We begin with the raw amino-acid sequence, 930 residues long: APC membrane recruitment protein 1 (930 aa).

6 disordered regions span residues 1–33 (MEIATRCEVGAMRGPSSDSVSHDIPQPQSPPSV), 55–76 (FFGGRGRSQRKGSSKTGVTKSQ), 104–133 (CSEPQKSQEDHGKSQSLPRQRRGLRGLFSS), 161–193 (TVPGALPSVSDRGDYHGDSQGEELVPDVPNQTT), 222–245 (EMDKRRRAEEEGIGEDEKTGRQEG), and 366–454 (EVCY…PRDS). Basic and acidic residues predominate over residues 222 to 242 (EMDKRRRAEEEGIGEDEKTGR). Composition is skewed to polar residues over residues 377-399 (DSPSLTPDQQLSSIRATSSSSPM) and 413-424 (SPQSDRQESVPN). Residues 439-452 (EESRERPHQERLPR) show a composition bias toward basic and acidic residues.

The protein belongs to the Amer family.

Its subcellular location is the cytoplasm. It localises to the cell membrane. It is found in the nucleus. Its function is as follows. Regulator of the canonical Wnt signaling pathway. Acts by specifically binding phosphatidylinositol 4,5-bisphosphate (PtdIns(4,5)P2), translocating to the cell membrane and interacting with key regulators of the canonical Wnt signaling pathway, such as components of the beta-catenin destruction complex. Acts both as a positive and negative regulator of the Wnt signaling pathway, depending on the context. This Danio rerio (Zebrafish) protein is APC membrane recruitment protein 1 (amer1).